A 335-amino-acid chain; its full sequence is uncharacterized protein (335 aa).

This is an uncharacterized protein from Acanthamoeba polyphaga mimivirus (APMV).